A 375-amino-acid polypeptide reads, in one-letter code: MKFELDTTDGRARRGRLVFDRGVVETPCFMPVGTYGTVKGMTPEEVEATGAQIILGNTFHLWLRPGQEIMKLHGDLHDFMQWKGPILTDSGGFQVFSLGDIRKITEQGVHFRNPINGDPIFLDPEKSMEIQYDLGSDIVMIFDECTPYPADWDYAKRSMEMSLRWAKRSRERFDSLGNKNALFGIIQGSIYEDLRDISVKGLVDIGFDGYAVGGLAVGEPKADMHRILEHVCPQIPADKPRYLMGVGKPEDLVEGVRRGIDMFDCVMPTRNARNGHLFVTDGVVKIRNAKYKSDTGPLDPECDCYTCRNYSRAYLHHLDRCNEILGARLNTIHNLRYYQRLMAGLRKAIEEGKLESFVTDFYQRQGREVPPLNVD.

Catalysis depends on D89, which acts as the Proton acceptor. Residues D89–F93, D143, Q187, and G214 each bind substrate. The segment at G245–D251 is RNA binding. D264 acts as the Nucleophile in catalysis. The segment at T269–R273 is RNA binding; important for wobble base 34 recognition. Residues C302, C304, C307, and H333 each coordinate Zn(2+).

The protein belongs to the queuine tRNA-ribosyltransferase family. Homodimer. Within each dimer, one monomer is responsible for RNA recognition and catalysis, while the other monomer binds to the replacement base PreQ1. It depends on Zn(2+) as a cofactor.

The enzyme catalyses 7-aminomethyl-7-carbaguanine + guanosine(34) in tRNA = 7-aminomethyl-7-carbaguanosine(34) in tRNA + guanine. Its pathway is tRNA modification; tRNA-queuosine biosynthesis. Catalyzes the base-exchange of a guanine (G) residue with the queuine precursor 7-aminomethyl-7-deazaguanine (PreQ1) at position 34 (anticodon wobble position) in tRNAs with GU(N) anticodons (tRNA-Asp, -Asn, -His and -Tyr). Catalysis occurs through a double-displacement mechanism. The nucleophile active site attacks the C1' of nucleotide 34 to detach the guanine base from the RNA, forming a covalent enzyme-RNA intermediate. The proton acceptor active site deprotonates the incoming PreQ1, allowing a nucleophilic attack on the C1' of the ribose to form the product. After dissociation, two additional enzymatic reactions on the tRNA convert PreQ1 to queuine (Q), resulting in the hypermodified nucleoside queuosine (7-(((4,5-cis-dihydroxy-2-cyclopenten-1-yl)amino)methyl)-7-deazaguanosine). The polypeptide is Queuine tRNA-ribosyltransferase (Shigella flexneri serotype 5b (strain 8401)).